A 398-amino-acid chain; its full sequence is Cystathionine gamma-lyase (398 aa).

Position 50 is a phosphoserine (Ser-50). Substrate-binding residues include Arg-61, Tyr-113, and Arg-118. At Lys-211 the chain carries N6-(pyridoxal phosphate)lysine. A substrate-binding site is contributed by Glu-338.

This sequence belongs to the trans-sulfuration enzymes family. As to quaternary structure, homotetramer. Interacts with CALM in a calcium-dependent manner. Pyridoxal 5'-phosphate is required as a cofactor.

It is found in the cytoplasm. The catalysed reaction is L,L-cystathionine + H2O = 2-oxobutanoate + L-cysteine + NH4(+). It carries out the reaction L-homoserine = 2-oxobutanoate + NH4(+). The enzyme catalyses L-selenocystathionine + H2O = L-selenocysteine + 2-oxobutanoate + NH4(+). It catalyses the reaction L-cysteine + H2O = hydrogen sulfide + pyruvate + NH4(+) + H(+). The catalysed reaction is L-homocysteine + H2O = 2-oxobutanoate + hydrogen sulfide + NH4(+) + H(+). Its pathway is amino-acid biosynthesis; L-cysteine biosynthesis; L-cysteine from L-homocysteine and L-serine: step 2/2. Functionally, catalyzes the last step in the trans-sulfuration pathway from L-methionine to L-cysteine in a pyridoxal-5'-phosphate (PLP)-dependent manner, which consists on cleaving the L,L-cystathionine molecule into L-cysteine, ammonia and 2-oxobutanoate. Part of the L-cysteine derived from the trans-sulfuration pathway is utilized for biosynthesis of the ubiquitous antioxidant glutathione. Besides its role in the conversion of L-cystathionine into L-cysteine, it utilizes L-cysteine and L-homocysteine as substrates (at much lower rates than L,L-cystathionine) to produce hydrogen sulfide (H2S). In vitro, it converts two L-cysteine molecules into lanthionine and H2S, and two L-homocysteine molecules to homolanthionine and H2S, which can be particularly relevant under conditions of severe hyperhomocysteinemia. Lanthionine and homolanthionine are structural homologs of L,L-cystathionine that differ by the absence or presence of an extra methylene group, respectively. Acts as a cysteine-protein sulfhydrase by mediating sulfhydration of target proteins: sulfhydration consists of converting -SH groups into -SSH on specific cysteine residues of target proteins such as GAPDH, PTPN1 and NF-kappa-B subunit RELA, thereby regulating their function. By generating the gasotransmitter H2S, it participates in a number of physiological processes such as vasodilation, bone protection, and inflammation. Plays an essential role in myogenesis by contributing to the biogenesis of H2S in skeletal muscle tissue. Can also accept homoserine as substrate. Catalyzes the elimination of selenocystathionine (which can be derived from the diet) to yield selenocysteine, ammonia and 2-oxobutanoate. In Rattus norvegicus (Rat), this protein is Cystathionine gamma-lyase (Cth).